Consider the following 298-residue polypeptide: MKYLLDLILLLPLLIVFSIESLVKLFIPKKKKSVAGEIVLITGAGHGIGRLTAYEFAKLNTKLVLWDINKNGIEETAAKCRKLGAQAHPFVVDCSQREEIYSAAKKVKEEVGDVSILVNNAGVVYTADLFATQDPQIEKTFEVNVLAHFWTTKAFLPVMMKNNHGHIVTVASAAGHTVVPFLLAYCSSKFAAVGFHRALTDELAALGRTGVRTSCLCPNFINTGFIKNPSTNLGPTLEPEEVVEHLMHGILTEKQMIFVPSSIALLTVLERIVPERFLQVLKHRINVKFDAVVGYKDK.

The first 21 residues, 1–21, serve as a signal peptide directing secretion; it reads MKYLLDLILLLPLLIVFSIES. Position 40–64 (40–64) interacts with NADP(+); it reads LITGAGHGIGRLTAYEFAKLNTKLV. Substrate is bound at residue serine 172. The active-site Proton acceptor is the tyrosine 185.

This sequence belongs to the short-chain dehydrogenases/reductases (SDR) family. 17-beta-HSD 3 subfamily. In terms of tissue distribution, expressed in the liver (at protein level). Also expressed in the intestine and, at much lower levels, in the kidney.

Its subcellular location is the endoplasmic reticulum. It localises to the lipid droplet. It catalyses the reaction 17beta-estradiol + NAD(+) = estrone + NADH + H(+). It carries out the reaction 17beta-estradiol + NADP(+) = estrone + NADPH + H(+). Its function is as follows. Can convert androstan-3-alpha,17-beta-diol (3-alpha-diol) to androsterone in vitro, suggesting that it may participate in androgen metabolism during steroidogenesis. May act by metabolizing compounds that stimulate steroid synthesis and/or by generating metabolites that inhibit it. Has no activity toward DHEA (dehydroepiandrosterone), or A-dione (4-androste-3,17-dione), and only a slight activity toward testosterone to A-dione. The chain is Estradiol 17-beta-dehydrogenase 11 (Hsd17b11) from Mus musculus (Mouse).